Here is a 376-residue protein sequence, read N- to C-terminus: MLDLIQTRRDLHQIPEIGLEEFKTQAYLLDVIEKLTTGKDFVQIRTWRTGILVYLQGSQPERTIGWRTDIDGLPIVEQTGLLFASQHQGRMHACGHDFHMTIALGCLERALEEQPKNNLLFLFQPAEENEAGGMLMYEDGAFGDWLPDQFYGLHVRPDLKVGQIATNTHTLFAGTCEVKIRFKGKGGHAAFPHEANDALVVASYFVTQVQSVVSRNVNPIEGAVVTFGVFQAGTTNNVITDTAFLHGTIRALTQDMSLLVQKRVKTVAEGVAAAFDMEVEVELKQGGYLPVENNPALARELMDFFDEKDGIELIDIEPAMTGEDFGYLLSKVDGVMFWLGIDSPYALHHPQMSPKEEVLAIGVAAVSSFLKKKAAE.

The active site involves Asp69. The active-site Proton acceptor is Glu128.

The protein belongs to the peptidase M20A family. N-acetyldiaminopimelate deacetylase subfamily.

The catalysed reaction is N-acetyl-(2S,6S)-2,6-diaminopimelate + H2O = (2S,6S)-2,6-diaminopimelate + acetate. The protein operates within amino-acid biosynthesis; L-lysine biosynthesis via DAP pathway; LL-2,6-diaminopimelate from (S)-tetrahydrodipicolinate (acetylase route): step 3/3. Functionally, catalyzes the conversion of N-acetyl-diaminopimelate to diaminopimelate and acetate. The sequence is that of N-acetyldiaminopimelate deacetylase from Streptococcus pneumoniae serotype 19F (strain G54).